The following is a 378-amino-acid chain: Alkaline elastase YaB (378 aa).

Residues 1–27 (MNKKMGKIVAGTALIISVAFSSSIAQA) form the signal peptide. The propeptide occupies 28–110 (AEEAKEKYLI…IEEDAEVTTM (83 aa)). Glutamine 111 is a binding site for Ca(2+). The Peptidase S8 domain maps to 114 to 377 (PWGINRVQAP…SGLVNAEAAT (264 aa)). Aspartate 141 serves as the catalytic Charge relay system. Aspartate 149 lines the Ca(2+) pocket. Histidine 171 serves as the catalytic Charge relay system. Leucine 182, asparagine 184, isoleucine 186, valine 188, alanine 272, tyrosine 274, and alanine 277 together coordinate Ca(2+). Serine 324 functions as the Charge relay system in the catalytic mechanism.

This sequence belongs to the peptidase S8 family. Ca(2+) serves as cofactor.

Its subcellular location is the secreted. In terms of biological role, digests elastin efficiently, has a substrate preference for Ala in P1 position. The chain is Alkaline elastase YaB (ale) from Bacillus sp. (strain YaB).